Here is a 224-residue protein sequence, read N- to C-terminus: Small ribosomal subunit protein uS2 (224 aa).

Positions 1–14 are enriched in basic and acidic residues; sequence MAEAKPAPEKEAAV. Positions 1-32 are disordered; the sequence is MAEAKPAPEKEAAVKTESVPVADDEAASAKEG.

It belongs to the universal ribosomal protein uS2 family.

The chain is Small ribosomal subunit protein uS2 from Methanosarcina mazei (strain ATCC BAA-159 / DSM 3647 / Goe1 / Go1 / JCM 11833 / OCM 88) (Methanosarcina frisia).